The primary structure comprises 405 residues: Pulcherriminic acid synthase (405 aa).

Residues Lys62, Asn229, Arg285, and Cys353 each contribute to the heme site.

This sequence belongs to the cytochrome P450 family. In terms of assembly, homodimer. The cofactor is heme.

The catalysed reaction is cyclo(L-leucyl-L-leucyl) + 6 reduced [2Fe-2S]-[ferredoxin] + 3 O2 + 4 H(+) = pulcherriminic acid + 6 oxidized [2Fe-2S]-[ferredoxin] + 4 H2O. In terms of biological role, involved in the biosynthesis of pulcherrimin, a red extracellular pigment. Catalyzes the oxidation of cyclo(L-Leu-L-Leu) (cLL) to yield pulcherriminic acid which forms pulcherrimin via a nonenzymic reaction with Fe(3+). Substrates with small alkyl groups (cAA, cLG, cLP) exhibit weaker binding to CYP134A1, but substrates with larger hydrophobic side chains bind in a similar regime to cLL. The polypeptide is Pulcherriminic acid synthase (cypX) (Bacillus subtilis (strain 168)).